Consider the following 347-residue polypeptide: Ceramide very long chain fatty acid hydroxylase scs7 (347 aa).

Over 1–156 (MASVTSEKCV…GNFLEPLTKT (156 aa)) the chain is Cytoplasmic. A helical transmembrane segment spans residues 157 to 177 (PWYMIPLIWVPCVTYGFLYAC). Thr-178 is a topological domain (lumenal). The chain crosses the membrane as a helical span at residues 179–199 (GIPFSVAITFFIIGLFTWTLV). Residues 200-238 (EYTMHRFLFHLDEYTPDHPIFLTMHFAFHGCHHFLPADK) lie on the Cytoplasmic side of the membrane. His-204, His-209, His-228, His-231, and His-232 together coordinate Zn(2+). Residues 239–259 (YRLVMPPALFLIFATPWYHFI) form a helical membrane-spanning segment. Residue Gln-260 is a topological domain, lumenal. The helical transmembrane segment at 261 to 281 (LVLPHYIGVAGFSGAILGYVF) threads the bilayer. Topologically, residues 282–347 (YDLTHYFLHH…EQGKISTKAK (66 aa)) are cytoplasmic. Residues His-286, His-290, His-306, His-309, and His-310 each contribute to the Zn(2+) site.

This sequence belongs to the sterol desaturase family. SCS7 subfamily. The cofactor is Zn(2+).

Its subcellular location is the endoplasmic reticulum membrane. It participates in sphingolipid metabolism. Ceramide hydroxylase involved in the hydroxylation of sphingolipid-associated very long chain fatty acids. Postulated to hydroxylate the very long chain fatty acid of dihydroceramides and phytoceramides at C-2. This is Ceramide very long chain fatty acid hydroxylase scs7 from Schizosaccharomyces pombe (strain 972 / ATCC 24843) (Fission yeast).